We begin with the raw amino-acid sequence, 291 residues long: 4-diphosphocytidyl-2-C-methyl-D-erythritol kinase (291 aa).

Lys14 is a catalytic residue. An ATP-binding site is contributed by 96–106 (PFGAGLGGGSS). Asp138 is an active-site residue.

The protein belongs to the GHMP kinase family. IspE subfamily.

The enzyme catalyses 4-CDP-2-C-methyl-D-erythritol + ATP = 4-CDP-2-C-methyl-D-erythritol 2-phosphate + ADP + H(+). The protein operates within isoprenoid biosynthesis; isopentenyl diphosphate biosynthesis via DXP pathway; isopentenyl diphosphate from 1-deoxy-D-xylulose 5-phosphate: step 3/6. Its function is as follows. Catalyzes the phosphorylation of the position 2 hydroxy group of 4-diphosphocytidyl-2C-methyl-D-erythritol. This chain is 4-diphosphocytidyl-2-C-methyl-D-erythritol kinase, found in Chlorobium phaeovibrioides (strain DSM 265 / 1930) (Prosthecochloris vibrioformis (strain DSM 265)).